The sequence spans 86 residues: MAVVIRLRREGKKGRPQYRIVVADKRCPTNGKYIEEVGFYDPMVEAPQGYRLKLQRVSYWLKQGAKPTETVDQIIKKVSKLETKDN.

It belongs to the bacterial ribosomal protein bS16 family.

The polypeptide is Small ribosomal subunit protein bS16 (Methylacidiphilum infernorum (isolate V4) (Methylokorus infernorum (strain V4))).